The sequence spans 313 residues: Olfactory receptor 10Z1 (313 aa).

Over 1-25 (MGQTNVTSWRDFVFLGFSSSGELQL) the chain is Extracellular. Asparagine 5 is a glycosylation site (N-linked (GlcNAc...) asparagine). Residues 26-46 (LLFALFLSLYLVTLTSNVFII) traverse the membrane as a helical segment. Topologically, residues 47-54 (IAIRLDSH) are cytoplasmic. Residues 55-75 (LHTPMYLFLSFLSFSETCYTL) traverse the membrane as a helical segment. Over 76–99 (GIIPRMLSGLAGGDQAISYVGCAA) the chain is Extracellular. Cysteine 97 and cysteine 189 are disulfide-bonded. A helical transmembrane segment spans residues 100-120 (QMFFSASWACTNCFLLAAMGF). Residues 121 to 139 (DRYVAICAPLHYASHMNPT) lie on the Cytoplasmic side of the membrane. The chain crosses the membrane as a helical span at residues 140–160 (LCAQLVITSFLTGYLFGLGMT). Over 161 to 197 (LVIFHLSFCSSHEIQHFFCDTPPVLSLACGDTGPSEL) the chain is Extracellular. The helical transmembrane segment at 198–217 (RIFILSLLVLLVSFFFITIS) threads the bilayer. The Cytoplasmic segment spans residues 218–237 (YAYILAAILRIPSAEGQKKA). A helical transmembrane segment spans residues 238–258 (FSTCASHLTVVIIHYGCASFV). Over 259–271 (YLRPKASYSLERD) the chain is Extracellular. A helical transmembrane segment spans residues 272–292 (QLIAMTYTVVTPLLNPIVYSL). Residues 293 to 313 (RNRAIQTALRNAFRGRLLGKG) are Cytoplasmic-facing.

The protein belongs to the G-protein coupled receptor 1 family.

Its subcellular location is the cell membrane. Functionally, odorant receptor. The protein is Olfactory receptor 10Z1 (OR10Z1) of Homo sapiens (Human).